Consider the following 223-residue polypeptide: Neurotrophic factor BDNF precursor form (223 aa).

The signal sequence occupies residues 1-5; it reads SCMKA. A propeptide spanning residues 6–114 is cleaved from the precursor; it reads APMKEVSIRG…AANMSMRVRR (109 aa). N107 carries an N-linked (GlcNAc...) asparagine glycan. Disulfide bonds link C127–C194 and C172–C223.

Belongs to the NGF-beta family.

It is found in the secreted. Its function is as follows. Promotes the survival of neuronal populations that are all located either in the central nervous system or directly connected to it. This Calabaria reinhardtii (Calabar boa) protein is Neurotrophic factor BDNF precursor form (BDNF).